We begin with the raw amino-acid sequence, 226 residues long: Putative ABC transporter ATP-binding protein BQ02700 (226 aa).

The 222-residue stretch at Ile4–Met225 folds into the ABC transporter domain. Gly35–Ser42 contributes to the ATP binding site.

This sequence belongs to the ABC transporter superfamily.

It is found in the cell inner membrane. Probably part of an ABC transporter complex. Responsible for energy coupling to the transport system. This chain is Putative ABC transporter ATP-binding protein BQ02700, found in Bartonella quintana (strain Toulouse) (Rochalimaea quintana).